The primary structure comprises 175 residues: NADH-ubiquinone oxidoreductase chain 6 (175 aa).

The next 5 membrane-spanning stretches (helical) occupy residues Met1–Ser21, Ser25–Leu45, Phe47–Val67, Val88–Leu108, and Tyr149–Met169.

Belongs to the complex I subunit 6 family. As to quaternary structure, core subunit of respiratory chain NADH dehydrogenase (Complex I) which is composed of 45 different subunits.

It is found in the mitochondrion inner membrane. It catalyses the reaction a ubiquinone + NADH + 5 H(+)(in) = a ubiquinol + NAD(+) + 4 H(+)(out). Functionally, core subunit of the mitochondrial membrane respiratory chain NADH dehydrogenase (Complex I) which catalyzes electron transfer from NADH through the respiratory chain, using ubiquinone as an electron acceptor. Essential for the catalytic activity and assembly of complex I. This is NADH-ubiquinone oxidoreductase chain 6 (MT-ND6) from Balaenoptera physalus (Fin whale).